The primary structure comprises 290 residues: Protease HtpX homolog (290 aa).

2 consecutive transmembrane segments (helical) span residues 5 to 27 (MWLR…GYLF) and 32 to 51 (VAFI…YWYS). His133 contributes to the Zn(2+) binding site. The active site involves Glu134. Residue His137 participates in Zn(2+) binding. The next 2 membrane-spanning stretches (helical) occupy residues 143–163 (ILIG…AYWA) and 182–202 (IIGA…IQAA). Glu208 contributes to the Zn(2+) binding site.

It belongs to the peptidase M48B family. Requires Zn(2+) as cofactor.

It localises to the cell membrane. The sequence is that of Protease HtpX homolog from Thermococcus kodakarensis (strain ATCC BAA-918 / JCM 12380 / KOD1) (Pyrococcus kodakaraensis (strain KOD1)).